The following is a 195-amino-acid chain: ATP-dependent Clp protease proteolytic subunit (195 aa).

S101 acts as the Nucleophile in catalysis. The active site involves H126.

The protein belongs to the peptidase S14 family. As to quaternary structure, component of the chloroplastic Clp protease core complex.

It localises to the plastid. The protein resides in the chloroplast stroma. It catalyses the reaction Hydrolysis of proteins to small peptides in the presence of ATP and magnesium. alpha-casein is the usual test substrate. In the absence of ATP, only oligopeptides shorter than five residues are hydrolyzed (such as succinyl-Leu-Tyr-|-NHMec, and Leu-Tyr-Leu-|-Tyr-Trp, in which cleavage of the -Tyr-|-Leu- and -Tyr-|-Trp bonds also occurs).. In terms of biological role, cleaves peptides in various proteins in a process that requires ATP hydrolysis. Has a chymotrypsin-like activity. Plays a major role in the degradation of misfolded proteins. In Oltmannsiellopsis viridis (Marine flagellate), this protein is ATP-dependent Clp protease proteolytic subunit.